Reading from the N-terminus, the 1323-residue chain is PAS domain-containing serine/threonine-protein kinase (1323 aa).

Met-1 is modified (N-acetylmethionine). Ser-19 is subject to Phosphoserine. The tract at residues 20-47 (LPLPVSAEGPAAQTTAEPSRSFSSAHRH) is disordered. The span at 31–43 (AQTTAEPSRSFSS) shows a compositional bias: polar residues. Thr-34 carries the phosphothreonine modification. PAS domains are found at residues 119–190 (SSPL…MEAD) and 335–402 (YRAS…SLQL). A Phosphoserine modification is found at Ser-582. Residues 837 to 857 (AASDRESPGHVPSTLDAGPED) are disordered. Ser-939 carries the phosphoserine modification. The Protein kinase domain occupies 999 to 1251 (YSTMSPLGSG…LEKLVTDPWV (253 aa)). ATP contacts are provided by residues 1005-1013 (LGSGAFGFV), Lys-1028, and 1082-1089 (EKHGSGLD). Asp-1128 (proton acceptor) is an active-site residue. Asp-1146 lines the ATP pocket. Thr-1161 and Thr-1165 each carry phosphothreonine; by autocatalysis. The interval 1298 to 1323 (CGGPVPGEAPNGQGCLHPGDPRLLTS) is disordered.

It belongs to the protein kinase superfamily. CAMK Ser/Thr protein kinase family. Autophosphorylated on Thr-1161 and Thr-1165. Autophosphorylation is activated by phospholipids. In terms of tissue distribution, ubiquitously expressed, with slightly higher expression in brain, prostate and testis. Reduced expression was found in placenta. Present in germ cells of testis and in the midpiece of sperm tails (at protein level).

The protein localises to the cytoplasm. It is found in the nucleus. It catalyses the reaction L-seryl-[protein] + ATP = O-phospho-L-seryl-[protein] + ADP + H(+). It carries out the reaction L-threonyl-[protein] + ATP = O-phospho-L-threonyl-[protein] + ADP + H(+). With respect to regulation, protein kinase activity is inhibited by the first PAS domain: binding of an unidentified ligand desinhibits the protein kinase activity. May be activated by autophosphorylation on Thr-1161 and Thr-1165. The activating role of autophosphorylation at Thr-1161 is unclear: according to a report, autophosphorylation at Thr-1161 does not play a major role in activation. Autophosphorylation is enhanced upon phosphatidylinositol monophosphate (phosphatidylinositol 4-phosphate) binding and inhibited upon phosphatidylinositol bi- and tri-phosphate binding. In contrast, phosphorylation of target proteins is inhibited upon all phosphatidylinositol-binding (phosphatidylinositol mono- bi- and tri-phosphate). Serine/threonine-protein kinase involved in energy homeostasis and protein translation. Phosphorylates EEF1A1, GYS1, PDX1 and RPS6. Probably plays a role under changing environmental conditions (oxygen, glucose, nutrition), rather than under standard conditions. Acts as a sensor involved in energy homeostasis: regulates glycogen synthase synthesis by mediating phosphorylation of GYS1, leading to GYS1 inactivation. May be involved in glucose-stimulated insulin production in pancreas and regulation of glucagon secretion by glucose in alpha cells; however such data require additional evidences. May play a role in regulation of protein translation by phosphorylating EEF1A1, leading to increase translation efficiency. May also participate in respiratory regulation. The protein is PAS domain-containing serine/threonine-protein kinase (PASK) of Homo sapiens (Human).